We begin with the raw amino-acid sequence, 216 residues long: Elongation factor Ts (216 aa).

An involved in Mg(2+) ion dislocation from EF-Tu region spans residues 81 to 84 (TDFV).

This sequence belongs to the EF-Ts family.

It is found in the cytoplasm. Functionally, associates with the EF-Tu.GDP complex and induces the exchange of GDP to GTP. It remains bound to the aminoacyl-tRNA.EF-Tu.GTP complex up to the GTP hydrolysis stage on the ribosome. The polypeptide is Elongation factor Ts (Geobacter sulfurreducens (strain ATCC 51573 / DSM 12127 / PCA)).